A 195-amino-acid chain; its full sequence is Nucleoside triphosphate pyrophosphatase (195 aa).

The active-site Proton acceptor is the Asp-70.

It belongs to the Maf family. The cofactor is a divalent metal cation.

The protein localises to the cytoplasm. It catalyses the reaction a ribonucleoside 5'-triphosphate + H2O = a ribonucleoside 5'-phosphate + diphosphate + H(+). The catalysed reaction is a 2'-deoxyribonucleoside 5'-triphosphate + H2O = a 2'-deoxyribonucleoside 5'-phosphate + diphosphate + H(+). Its function is as follows. Nucleoside triphosphate pyrophosphatase. May have a dual role in cell division arrest and in preventing the incorporation of modified nucleotides into cellular nucleic acids. The protein is Nucleoside triphosphate pyrophosphatase of Synechocystis sp. (strain ATCC 27184 / PCC 6803 / Kazusa).